Here is a 365-residue protein sequence, read N- to C-terminus: 3-dehydroquinate synthase (365 aa).

NAD(+)-binding positions include 69–74 (DGEAHK), 103–107 (GVIGD), 127–128 (TT), Lys140, Lys149, and 167–170 (TLNT). Zn(2+) is bound by residues Glu182, His245, and His262.

Belongs to the sugar phosphate cyclases superfamily. Dehydroquinate synthase family. Co(2+) is required as a cofactor. Zn(2+) serves as cofactor. The cofactor is NAD(+).

Its subcellular location is the cytoplasm. The catalysed reaction is 7-phospho-2-dehydro-3-deoxy-D-arabino-heptonate = 3-dehydroquinate + phosphate. It participates in metabolic intermediate biosynthesis; chorismate biosynthesis; chorismate from D-erythrose 4-phosphate and phosphoenolpyruvate: step 2/7. Functionally, catalyzes the conversion of 3-deoxy-D-arabino-heptulosonate 7-phosphate (DAHP) to dehydroquinate (DHQ). The polypeptide is 3-dehydroquinate synthase (Pseudomonas putida (strain W619)).